Here is a 196-residue protein sequence, read N- to C-terminus: Peptidyl-tRNA hydrolase (196 aa).

A tRNA-binding site is contributed by Tyr-16. The active-site Proton acceptor is the His-21. Residues Phe-67, Asn-69, and Asn-115 each coordinate tRNA.

This sequence belongs to the PTH family. In terms of assembly, monomer.

Its subcellular location is the cytoplasm. It catalyses the reaction an N-acyl-L-alpha-aminoacyl-tRNA + H2O = an N-acyl-L-amino acid + a tRNA + H(+). Hydrolyzes ribosome-free peptidyl-tRNAs (with 1 or more amino acids incorporated), which drop off the ribosome during protein synthesis, or as a result of ribosome stalling. Functionally, catalyzes the release of premature peptidyl moieties from peptidyl-tRNA molecules trapped in stalled 50S ribosomal subunits, and thus maintains levels of free tRNAs and 50S ribosomes. The sequence is that of Peptidyl-tRNA hydrolase from Edwardsiella ictaluri (strain 93-146).